Consider the following 323-residue polypeptide: uncharacterized protein (323 aa).

Residues 4 to 24 (IIFAFIILFVFLLPMIIFYQP) traverse the membrane as a helical segment.

It is found in the membrane. This is an uncharacterized protein from Escherichia coli (strain K12).